A 247-amino-acid chain; its full sequence is 3-deoxy-manno-octulosonate cytidylyltransferase (247 aa).

It belongs to the KdsB family.

Its subcellular location is the cytoplasm. The enzyme catalyses 3-deoxy-alpha-D-manno-oct-2-ulosonate + CTP = CMP-3-deoxy-beta-D-manno-octulosonate + diphosphate. The protein operates within nucleotide-sugar biosynthesis; CMP-3-deoxy-D-manno-octulosonate biosynthesis; CMP-3-deoxy-D-manno-octulosonate from 3-deoxy-D-manno-octulosonate and CTP: step 1/1. Its pathway is bacterial outer membrane biogenesis; lipopolysaccharide biosynthesis. Its function is as follows. Activates KDO (a required 8-carbon sugar) for incorporation into bacterial lipopolysaccharide in Gram-negative bacteria. This Chlorobium phaeobacteroides (strain DSM 266 / SMG 266 / 2430) protein is 3-deoxy-manno-octulosonate cytidylyltransferase.